Reading from the N-terminus, the 107-residue chain is Large ribosomal subunit protein uL23 (107 aa).

The protein belongs to the universal ribosomal protein uL23 family. In terms of assembly, part of the 50S ribosomal subunit. Contacts protein L29, and trigger factor when it is bound to the ribosome.

Functionally, one of the early assembly proteins it binds 23S rRNA. One of the proteins that surrounds the polypeptide exit tunnel on the outside of the ribosome. Forms the main docking site for trigger factor binding to the ribosome. In Rhodopirellula baltica (strain DSM 10527 / NCIMB 13988 / SH1), this protein is Large ribosomal subunit protein uL23.